Here is a 4351-residue protein sequence, read N- to C-terminus: MTLVLLGLAILLLHRAACEKSLEETIPPLSWRFTHSLYNATIYENSAPKTYVESPVKMGMYLAEPHWVVKYRIISGDAAGVFKTEEHVVGNFCFLRIRTKSSNTALLNREVRDSYTLIVQASDKSLEFEALTQVVVHILDQNDLKPLFSPPSYRVTISEDRPLKSPICKVTATDADLGQNAEFYYAFNARSEVFAIHPTSGVVTVAGKLNVTRRGKYELQVLAVDRMRKISEGNGFGNLASLVIRVEPVHRKPPAINLVVLNPPEGDEGDIYAIVTVDTNGSGAEVDSLEVVGGDPGKYFKVLRSYAQGNEFNLVAVRDINWAEHPHGFNISLQTHSWSRFPPHSIIRAFHLPSWKLANLRFEKAVYRVKLSEFSPPGSRVALVKVTTALPNLRYSLKPSSRNTAFKLNARTGLITTTKLVDFHEQNQYQLHVKTSLGQATTTVIIDIVDCNNHAPVFNRSSYEGTLDENIPPGTSVLTVTATDQDHGDNGHITYSIAGPKAVPFSIDPLLGVISTTKPMDYELMKRIYTFRVRASDWGSPFRQEKEVSVSLRLKNLNDNQPMFEEVNCTVSLRQDVPVGKSIMAVSAIDMDELQNLKYEIVSGNEQDYFHLNHFSGVISLKRSFMNLTAVRPTIYSLKITASDGKNYASPTTLKVTVVKDPHSEVPVQCDKTGVLTHITKTILQSAGLQSQELGEEEFTSLSNYQINHHSPQFEDHFPQSIDILEQVPINTPLARLAATDPDTGFHGKLVYVISDGNEEGCFDIELETGLLMVAAALDYETTSFYVLNVTVYDLGTPPKSSWKLLTVTVKDWNDNPPRFPPGGYQLTISEDTEVGTTIAELKTEDADSEDNRRVRYTLLTPTEKFSLHPFTGELVVTGHLDRESESQYILKAEARDQPTKGHQLFSVTDLIVTLEDINDNPPQCITEHRRLKVPEDMPLGTVLTFLDASDPDLGPAGEVKYILVEDAHGTFQVHPMTGALSLEKELDFERRAGYNLSFWASDSGKPLSRRTLCHVEVLVMDVNENLHSPHFSSFVYQGQVQENSPAGTPVMVVTAQDDDSGLDGELQYFLRAGTGLETFSINQDTGMLETLAPLDREFTPYYWLTVLAVDRGSVPLSAVTEVYIEVTDINDNIPSMSRPVFYPSVLEDAPLGTSVLQLEAWDPDSSSQGKLTFNLTSGNHLGHFIVHPFTGLLTTAKQLDRENKDEYVLEVTVQDNGDPSLRSTSRVVVCILDVNDNPPMFSHKLFNVRLSERLSPLSPEPVYRLVASDPDEGLNGSVTYSIEESDEESFRIDPVTGVVSSSSTFAAGEYNILTIKATDSGQPALSTSVRLHIEWIPQPRPSSIPLSFDESYYSFTVMETDPVNHMVGVISVEGRPGLFWFHISDGDKDMDFDIEKTTGSIVIARPLDTRRKSSYNLTVEVTDGFHTIATQVHIFMIANINHHRPQFLQDHYEIRVPQDTLPGVELLRVQATDQDHGKGLIYTILSSQDPGSANLFQLDPSSGVLVTVGTLELHSGPSQHILTVMVRDQEMPIKRNFVWVTIHVEDGNLHSPHFTQLRYEANVPDTTAPGTELLQVRAVDADRGANAEIHYSFLKGNSDGFFNIDSLLGIITVAQRLYHVHLTRHALTVKAEDQGSPRRHDLALVVIHVHPSDSSAPVFSKDEYFIEIPESVPIGSPILLLSAGSSSEVTYELREGNKDSVFSMNSYSGLISTQKRLDHEKVPSYRLRIRGSNMAGVFTEVVALVYIIDENDNPPAFGKPTFLGHISEAAPLHSLILGEDNSPLVVRASDSDREANSLLVYKILEPEALKFFKIDPSMGTLTTTSELDFEDTPLFQFNIYVHDQGTPILFAPRSAKVIIHVRDVNDSPPRFSEQIYEVAVVEPIHPGMGLLTVQAEDNDSRVTYSIKTSNADEAVTIHPTTGQISVVNPATLRLFQKFSIRASDGLYHDTAVVKISLTQVLDKSLQFDQDVYRARVTENTPHRKALVILGVHGNHLNDTLSYFLLNGTDLFHMIESAGVLQTRGGTFDREQQDTHEVAVEVRDNRVPQRVAQALVRVSVEDVNDNIPEFQHLPYYTVIQDGTEPGDVLFQVSATDKDLGANGSVTYGFAEDYAYFRIDPYVGDISLKKPFDYQALNKYHLRVIARDSGIPPLQTEVEVHVTVRNKSNPLFQSPYYKVKVPENITLYTPILHTQARSPEGLRLIYNIVEEEPLMLFTTDFKTGVLTVTGPLDYESKNKHVFTVRATDTALGSFSEATVEVLVEDINDNPPTFSQLVYTTSVSEGSPAQTPVIQLLASDQDSGQNQDVSYQIVEDGSDVSKFFRINGSTGEIFTIQELDYETHQHFRVKVRAMDKGDPPLTGETLVVVNVSDINDNPPKFREPQYEANVSELATCGHLVLKVQALDPDIGDTSRLEYLILSGNQDRHFSINSTSGIISMFNLCKKQLDSSYNLRVGASDGVFRATVPVYINTTNANKYSPEFQQNVYEAELAENAKVGTKVIELLAIDKDSGPYGTVDYTIINKLAGERFFINPRGQITTLQKLDRENSTERVIAIKVMARDGGGKVAFCTVKIILTDENDNAPQFKASGYTVSIPSNVSRDSPIIQVLAYDADEGRNADVTYSVDSTEDLAEEIIEVNPTTGVVKVKESLVGLENRAVDFNIKAQDGGPPHWDSLVPVRLQVVPNEIPLPKFSEPLYTFSAPEDLPEGSEIGSVKAVAAQDPIIYSLVQGTTPESNSDDVFSLDQDTGVLKVRKAMDHESTKWYQIDLMAHCPHEDTDLVSLVSVSIQVEDVNDNRPVFEADPYKAFLTENMPGGTTVIQVTANDQDTGSDGQVSYRLSVEPGSNIHELFAVDSESGWITTLQELDCETQQTYRFYVVAFDHGQTIQLSSQALVEVSITDENDNPPRFASEDYRGSVVENNEPGELVATLKTLDADVSDQNRQVTCYITEGDPLGQFSISQVGDEWRISSRKTLDREHIAKYLLRVTASDGKFQASVPVEVFVVDINDNSPQCSQLLYTGKVREDVTPGHFILKVSAIDVDMDTNAQITYSLHGPGAQEFKLDPHTGELTTLTVLDRERKDVYNLVAKATDGGGQSCQAEVTLHIEDVNDNAPRFFPSHCDVAVFDNTTVKTPVAVVFARDPDQGANAQVVYSLTDSADGQFSIDATSGVIRLEKPLQVRASSAVELTVRASDLGTPIPLSTLGTVTVSVVGLEDYLPIFLNAEHSTQVPEDAPIDMEVLHLATLTRPGSEKTGYHITGGNEQGKFRLDAHTGILYVNGSLDFETNPKYFLSIECSRKSSSSLSDVTTIVINVTDVNEHHPRFTHDLYTVRVLENAVVGDVILTVSASDDDGPVNSAITYSLVGGNQLGHFTINPKKGKLQVAKALDWEQTPSYSLRLRATDSGQPPLHEDTEVAVEVVDVNDNPPRFFQLNYSTSVQENSPIGIKVLQLILDDPDSPQNGPPYFFRITEGNTGSVFRVTPDGWLVTAASLSKKAREWYQLHIEVSDSGLPPLSSSTLVRVQVTEQSRYPPSTLPLEISITKGEEEFQGGMIGKIHATDRDPQDTLTYSLEQEGGLDRYFTVGASDGKIIASQGLPHGRYSFNVTVSDGTFTTTTGVHVHVWHMEPEVPQQAVWLGFHQLTPEELVSDHWRNLQRFLSNLLDVKRANIHLASLQPAEVTAGVDVLLVFERHSGTSYDLQELASAIAHSVREIEHSVGIRMRSALPVVPCQGQSCQDQTCQETVSLEPRVGPSYSTARLSILTPRHHLGRNCSCNGTTLRFSGQSYVQYRPLEAQNWQIHFYLKTLQPWALLMFTNETASISLKLANGFSHLEYHCPGGFYGNLSSRYPVNDGQWHSMLLEERDTSVHLLVDITDNASLVIPEECQGLRTERQLLLGGLVPSNPSSNVSLGFEGCLDAVVVNGERLELLGREKKMEGRLETWALSQCCWPGTACSQSPCLNGGSCSPALGSGYLCRCPPPFSGRNCELGRENCTSAPCQEGGTCVSSPEGTSCNCPHPYTGDRCEMEARGCSGGHCLITPEIKRGDWGQQEFLVITVALPLVIIATVGLLLYCRRRKSHKPVTMEDPDLLARSIGVDTQASPAIELDPLNTSSCNNLNQPEPSKTSVPNELVTFGPSSKQRPMVCSVPPRLPPAAVSSHPGHEPIIKRTWSGEELVYPSGAAVWPPTYSRKKHWEYPHPETMQGTLPPSPRRHVGPAVMPDPTGLYGGFPFPLELENKRAPLPPRYSNQNLEDLMPPRPPSPREHLLAPCLNEYTAISYYHSQFRQGGGGPCLAEGGYKGVSMRLSRAGPSYADCEVNGGPATGRSQPRAPPNYEGSDMVESDYGSCEEVMF.

The N-terminal stretch at 1–18 is a signal peptide; the sequence is MTLVLLGLAILLLHRAAC. At 19-4050 the chain is on the extracellular side; sequence EKSLEETIPP…IKRGDWGQQE (4032 aa). 2 Cadherin domains span residues 34–148 and 149–256; these read THSL…KPLF and SPPS…PPAI. Asparagine 39, asparagine 210, asparagine 280, and asparagine 330 each carry an N-linked (GlcNAc...) asparagine glycan. 31 consecutive Cadherin domains span residues 363–458, 459–564, 565–669, 716–820, 821–925, 926–1032, 1033–1142, 1138–1242, 1243–1346, 1350–1448, 1449–1555, 1556–1660, 1661–1758, 1759–1872, 1873–1968, 1969–2070, 2071–2171, 2172–2272, 2273–2379, 2380–2481, 2482–2585, 2586–2692, 2693–2799, 2800–2908, 2909–3013, 3014–3115, 3116–3220, 3221–3323, 3324–3428, 3429–3533, and 3534–3631; these read EKAV…APVF, NRSS…QPMF, EEVN…VPVQ, DHFP…PPRF, PPGG…PPQC, ITEH…SPHF, SSFV…RPVF, SRPV…PPMF, SHKL…SSIP, DESY…RPQF, LQDH…SPHF, TQLR…APVF, SKDE…PPAF, GKPT…PPRF, SEQI…SLQF, DQDV…IPEF, QHLP…NPLF, QSPY…PPTF, SQLV…PPKF, REPQ…SPEF, QQNV…APQF, KASG…LPKF, SEPL…RPVF, EADP…PPRF, ASED…SPQC, SQLL…APRF, FPSH…LPIF, LNAE…HPRF, THDL…PPRF, FQLN…PPST, and LPLE…VPQQ. N-linked (GlcNAc...) asparagine glycans are attached at residues asparagine 459, asparagine 568, asparagine 627, and asparagine 789. A glycan (N-linked (GlcNAc...) asparagine) is linked at asparagine 996. N-linked (GlcNAc...) asparagine glycans are attached at residues asparagine 1175, asparagine 1276, and asparagine 1417. Asparagine 1899, asparagine 1998, asparagine 2007, asparagine 2102, asparagine 2165, asparagine 2183, asparagine 2325, asparagine 2368, asparagine 2387, asparagine 2430, asparagine 2470, asparagine 2547, and asparagine 2597 each carry an N-linked (GlcNAc...) asparagine glycan. 3 N-linked (GlcNAc...) asparagine glycosylation sites follow: asparagine 3127, asparagine 3278, and asparagine 3312. N-linked (GlcNAc...) asparagine glycosylation is found at asparagine 3432, asparagine 3603, asparagine 3770, asparagine 3774, asparagine 3815, asparagine 3842, asparagine 3875, and asparagine 3906. A Laminin G-like domain is found at 3775-3946; that stretch reads GTTLRFSGQS…RLETWALSQC (172 aa). Intrachain disulfides connect cysteine 3914/cysteine 3946, cysteine 3953/cysteine 3964, cysteine 3958/cysteine 3974, and cysteine 3976/cysteine 3985. 2 consecutive EGF-like domains span residues 3949–3986 and 3988–4024; these read PGTA…RNCE and GREN…DRCE. An N-linked (GlcNAc...) asparagine glycan is attached at asparagine 3991. Disulfide bonds link cysteine 3992/cysteine 4003, cysteine 3997/cysteine 4012, and cysteine 4014/cysteine 4023. The helical transmembrane segment at 4051–4071 threads the bilayer; the sequence is FLVITVALPLVIIATVGLLLY. Residues 4072–4351 lie on the Cytoplasmic side of the membrane; sequence CRRRKSHKPV…DYGSCEEVMF (280 aa). Positions 4316–4340 are disordered; that stretch reads VNGGPATGRSQPRAPPNYEGSDMVE.

Homodimer. In terms of tissue distribution, cerebellum-specific expression. Expressed in thin parallel fibers of cerebellar granule cells.

It is found in the cell membrane. The protein resides in the cell junction. It localises to the golgi apparatus. Its subcellular location is the trans-Golgi network. Its function is as follows. Involved in the regulation of cell migration. May be involved in mediating the organization of the parallel fibers of granule cells during cerebellar development. This chain is Protocadherin Fat 2 (Fat2), found in Rattus norvegicus (Rat).